The chain runs to 455 residues: DENN domain-containing protein 11 (455 aa).

The tract at residues 1-59 (MVEQGDAAPLLRWAEGPAVSVPQDPALQAGGWVRGGSGEGRVAAEAPRRREPDEPAPPE) is disordered. Val-2 carries the post-translational modification N-acetylvaline. The uDENN domain maps to 15-187 (EGPAVSVPQD…QLEMPGHYSH (173 aa)). Arg-41 carries the omega-N-methylarginine modification. Residues 214–362 (WLPSIHRYMY…INSADREKYR (149 aa)) form the cDENN domain. Residues 364–455 (LNEQRQMLLY…MLVIDNPCCP (92 aa)) form the dDENN domain.

The protein belongs to the DENND11 family.

Probable guanine nucleotide exchange factor (GEF). May promote the exchange of GDP to GTP, converting inactive GDP-bound small GTPases into their active GTP-bound form. May play a role in neuritogenesis, as well as in neuronal recovery and/or restructuring in the hippocampus following transient cerebral ischemia. The sequence is that of DENN domain-containing protein 11 (Dennd11) from Mus musculus (Mouse).